A 198-amino-acid polypeptide reads, in one-letter code: Proteasome subunit beta 2 (198 aa).

Positions 1-4 are cleaved as a propeptide — removed in mature form; by autocatalysis; that stretch reads MVLA. T5 functions as the Nucleophile in the catalytic mechanism.

It belongs to the peptidase T1B family. In terms of assembly, the 20S proteasome core is composed of 14 alpha and 14 beta subunits that assemble into four stacked heptameric rings, resulting in a barrel-shaped structure. The two inner rings, each composed of seven catalytic beta subunits, are sandwiched by two outer rings, each composed of seven alpha subunits. The catalytic chamber with the active sites is on the inside of the barrel. Has a gated structure, the ends of the cylinder being occluded by the N-termini of the alpha-subunits. Is capped at one or both ends by the proteasome regulatory ATPase, PAN.

It is found in the cytoplasm. The catalysed reaction is Cleavage of peptide bonds with very broad specificity.. Its activity is regulated as follows. The formation of the proteasomal ATPase PAN-20S proteasome complex, via the docking of the C-termini of PAN into the intersubunit pockets in the alpha-rings, triggers opening of the gate for substrate entry. Interconversion between the open-gate and close-gate conformations leads to a dynamic regulation of the 20S proteasome proteolysis activity. Functionally, component of the proteasome core, a large protease complex with broad specificity involved in protein degradation. The protein is Proteasome subunit beta 2 of Korarchaeum cryptofilum (strain OPF8).